Here is a 145-residue protein sequence, read N- to C-terminus: D-aminoacyl-tRNA deacylase (145 aa).

A Gly-cisPro motif, important for rejection of L-amino acids motif is present at residues 137 to 138 (GP).

This sequence belongs to the DTD family. In terms of assembly, homodimer.

The protein localises to the cytoplasm. It catalyses the reaction glycyl-tRNA(Ala) + H2O = tRNA(Ala) + glycine + H(+). The catalysed reaction is a D-aminoacyl-tRNA + H2O = a tRNA + a D-alpha-amino acid + H(+). An aminoacyl-tRNA editing enzyme that deacylates mischarged D-aminoacyl-tRNAs. Also deacylates mischarged glycyl-tRNA(Ala), protecting cells against glycine mischarging by AlaRS. Acts via tRNA-based rather than protein-based catalysis; rejects L-amino acids rather than detecting D-amino acids in the active site. By recycling D-aminoacyl-tRNA to D-amino acids and free tRNA molecules, this enzyme counteracts the toxicity associated with the formation of D-aminoacyl-tRNA entities in vivo and helps enforce protein L-homochirality. This chain is D-aminoacyl-tRNA deacylase, found in Teredinibacter turnerae (strain ATCC 39867 / T7901).